The sequence spans 567 residues: Proline--tRNA ligase (567 aa).

This sequence belongs to the class-II aminoacyl-tRNA synthetase family. ProS type 1 subfamily. In terms of assembly, homodimer.

It is found in the cytoplasm. It catalyses the reaction tRNA(Pro) + L-proline + ATP = L-prolyl-tRNA(Pro) + AMP + diphosphate. Catalyzes the attachment of proline to tRNA(Pro) in a two-step reaction: proline is first activated by ATP to form Pro-AMP and then transferred to the acceptor end of tRNA(Pro). As ProRS can inadvertently accommodate and process non-cognate amino acids such as alanine and cysteine, to avoid such errors it has two additional distinct editing activities against alanine. One activity is designated as 'pretransfer' editing and involves the tRNA(Pro)-independent hydrolysis of activated Ala-AMP. The other activity is designated 'posttransfer' editing and involves deacylation of mischarged Ala-tRNA(Pro). The misacylated Cys-tRNA(Pro) is not edited by ProRS. This is Proline--tRNA ligase from Staphylococcus aureus (strain MRSA252).